A 603-amino-acid chain; its full sequence is Sesquiterpene synthase Cad (603 aa).

Residues 1–13 (MAEVGLSQNSYAS) show a composition bias toward polar residues. Residues 1–23 (MAEVGLSQNSYASANHDKKSEQQ) are disordered. Mg(2+) contacts are provided by aspartate 357, aspartate 361, aspartate 498, and glutamate 506. The short motif at 357 to 361 (DDIFD) is the DDXXD motif element.

The protein belongs to the terpene synthase family. Tpsa subfamily. Requires Mg(2+) as cofactor. The cofactor is Mn(2+). As to expression, mostly expressed in leaves and, to a lower extent, in stems and xylem.

The catalysed reaction is (2E,6E)-farnesyl diphosphate = beta-cadinene + diphosphate. It participates in secondary metabolite biosynthesis; terpenoid biosynthesis. In terms of biological role, sesquiterpene synthase involved in the biosynthesis of volatile compounds. Mediates the conversion of (2E,6E)-farnesyl diphosphate (FPP) into beta-cadinene. Not active with geranyl diphosphate (GPP) and geranylgeranyl diphosphate (GGPP) as substrates. In Chamaecyparis formosensis (Formosan cypress), this protein is Sesquiterpene synthase Cad.